A 118-amino-acid polypeptide reads, in one-letter code: Hydrogenase maturation factor HypA (118 aa).

His2 is a binding site for Ni(2+). Residues Cys74, Cys77, Cys91, and Cys94 each coordinate Zn(2+).

This sequence belongs to the HypA/HybF family.

In terms of biological role, involved in the maturation of [NiFe] hydrogenases. Required for nickel insertion into the metal center of the hydrogenase. The chain is Hydrogenase maturation factor HypA from Helicobacter hepaticus (strain ATCC 51449 / 3B1).